Consider the following 89-residue polypeptide: YcgL domain-containing protein Asuc_1390 (89 aa).

Residues 1–85 (MLCAIYKSKK…KDDWLFTIEK (85 aa)) form the YcgL domain.

In Actinobacillus succinogenes (strain ATCC 55618 / DSM 22257 / CCUG 43843 / 130Z), this protein is YcgL domain-containing protein Asuc_1390.